Reading from the N-terminus, the 336-residue chain is Ferrochelatase (336 aa).

His206 and Glu287 together coordinate Fe cation.

Belongs to the ferrochelatase family.

It is found in the cytoplasm. The enzyme catalyses heme b + 2 H(+) = protoporphyrin IX + Fe(2+). Its pathway is porphyrin-containing compound metabolism; protoheme biosynthesis; protoheme from protoporphyrin-IX: step 1/1. Functionally, catalyzes the ferrous insertion into protoporphyrin IX. In Neisseria meningitidis serogroup A / serotype 4A (strain DSM 15465 / Z2491), this protein is Ferrochelatase.